We begin with the raw amino-acid sequence, 125 residues long: Large ribosomal subunit protein uL22 (125 aa).

This sequence belongs to the universal ribosomal protein uL22 family. As to quaternary structure, part of the 50S ribosomal subunit.

This protein binds specifically to 23S rRNA; its binding is stimulated by other ribosomal proteins, e.g. L4, L17, and L20. It is important during the early stages of 50S assembly. It makes multiple contacts with different domains of the 23S rRNA in the assembled 50S subunit and ribosome. Its function is as follows. The globular domain of the protein is located near the polypeptide exit tunnel on the outside of the subunit, while an extended beta-hairpin is found that lines the wall of the exit tunnel in the center of the 70S ribosome. This chain is Large ribosomal subunit protein uL22, found in Novosphingobium aromaticivorans (strain ATCC 700278 / DSM 12444 / CCUG 56034 / CIP 105152 / NBRC 16084 / F199).